Consider the following 462-residue polypeptide: Peroxisomal membrane protein PEX31 (462 aa).

Residues 1–19 (MSEINNENLEPTSSTVAES) show a composition bias toward polar residues. A disordered region spans residues 1–26 (MSEINNENLEPTSSTVAESTESKNKH). The Cytoplasmic segment spans residues 1-90 (MSEINNENLE…LSIITWSNDN (90 aa)). A helical membrane pass occupies residues 91–111 (VSANLLGIFLFTVCVLYFGFI). Residues 112-175 (TRYFGHLMIV…TILSAQDVRR (64 aa)) lie on the Peroxisomal side of the membrane. A helical transmembrane segment spans residues 176-196 (LLFTIAFLSPVYIFLTVFVLS). Topologically, residues 197–462 (PNYLMLIGGL…ISDVSMSPSL (266 aa)) are cytoplasmic. The disordered stretch occupies residues 406–425 (PTVEKATPNSHALKSEENNR). A Phosphoserine modification is found at S432. T435 carries the phosphothreonine modification.

The protein belongs to the PEX28-32 family. PEX30/31 subfamily.

Its subcellular location is the peroxisome membrane. The protein is Peroxisomal membrane protein PEX31 (PEX31) of Saccharomyces cerevisiae (strain ATCC 204508 / S288c) (Baker's yeast).